The primary structure comprises 327 residues: Ran-specific GTPase-activating protein 2 (327 aa).

Disordered stretches follow at residues 1-96 and 109-205; these read MSET…KKED and GFGV…KQEV. The segment covering 24-83 has biased composition (basic and acidic residues); it reads PIDKLDGTPKRPREKDQDEQAEETSDKSEAPNKNDEEKKEEGKKDQEPSHKKIKVDDGKT. At Thr31 the chain carries Phosphothreonine. Polar residues predominate over residues 122-133; the sequence is ATTSTESLPASD. Positions 140 to 152 are enriched in low complexity; sequence FAFGSGLSFGSGF. 2 stretches are compositionally biased toward basic and acidic residues: residues 157–179 and 189–205; these read NKTE…KVHS and EDTK…KQEV. Residue Ser179 is modified to Phosphoserine. Residues 191–327 enclose the RanBD1 domain; the sequence is TKDKPKPLKL…YNIIVKSVPK (137 aa).

As to quaternary structure, interacts with GSP1, XPO1 and SRM1.

It localises to the nucleus. Functionally, important for the export of protein containing nuclear export signal (NES) out of the nucleus. Stimulates the GTPase activity of GSP1. This is Ran-specific GTPase-activating protein 2 (YRB2) from Saccharomyces cerevisiae (strain ATCC 204508 / S288c) (Baker's yeast).